The chain runs to 87 residues: uncharacterized protein (87 aa).

This is an uncharacterized protein from Ureaplasma parvum serovar 3 (strain ATCC 700970).